Consider the following 161-residue polypeptide: Regulator of ribonuclease activity A (161 aa).

Belongs to the RraA family. In terms of assembly, homotrimer. Binds to both RNA-binding sites in the C-terminal region of Rne and to RhlB.

It is found in the cytoplasm. Functionally, globally modulates RNA abundance by binding to RNase E (Rne) and regulating its endonucleolytic activity. Can modulate Rne action in a substrate-dependent manner by altering the composition of the degradosome. Modulates RNA-binding and helicase activities of the degradosome. The polypeptide is Regulator of ribonuclease activity A (Tolumonas auensis (strain DSM 9187 / NBRC 110442 / TA 4)).